A 359-amino-acid chain; its full sequence is Phospho-N-acetylmuramoyl-pentapeptide-transferase (359 aa).

The next 10 helical transmembrane spans lie at 27 to 47 (IGAAVCAFLLVLFLGPLFIRT), 71 to 91 (VPTMGGLLILLSVTVSTLLWA), 93 to 113 (LDNPLIWLVLLVTLFFGMIGA), 134 to 154 (LLLQIAGALIVGFFVYLHPGY), 170 to 190 (LGWFYIVFAVIVIVGASNAVN), 203 to 223 (MVVSSAVYLLFAYLAGNVVLA), 234 to 254 (SGELAIFCGTLFGACLGFLWF), 262 to 282 (FMGDVGSLALGGALGSIAIII), 286 to 306 (FLLAIVGGVFVMEALSVMLQV), and 336 to 356 (KVVVRFWIVSIILGLFAIATL).

This sequence belongs to the glycosyltransferase 4 family. MraY subfamily. Requires Mg(2+) as cofactor.

The protein localises to the cell inner membrane. The enzyme catalyses UDP-N-acetyl-alpha-D-muramoyl-L-alanyl-gamma-D-glutamyl-meso-2,6-diaminopimeloyl-D-alanyl-D-alanine + di-trans,octa-cis-undecaprenyl phosphate = di-trans,octa-cis-undecaprenyl diphospho-N-acetyl-alpha-D-muramoyl-L-alanyl-D-glutamyl-meso-2,6-diaminopimeloyl-D-alanyl-D-alanine + UMP. It participates in cell wall biogenesis; peptidoglycan biosynthesis. Catalyzes the initial step of the lipid cycle reactions in the biosynthesis of the cell wall peptidoglycan: transfers peptidoglycan precursor phospho-MurNAc-pentapeptide from UDP-MurNAc-pentapeptide onto the lipid carrier undecaprenyl phosphate, yielding undecaprenyl-pyrophosphoryl-MurNAc-pentapeptide, known as lipid I. This chain is Phospho-N-acetylmuramoyl-pentapeptide-transferase, found in Desulfotalea psychrophila (strain LSv54 / DSM 12343).